The chain runs to 493 residues: (+)-menthofuran synthase (493 aa).

Met1 is a topological domain (cytoplasmic). The helical; Signal-anchor for type II membrane protein transmembrane segment at 2–19 (AALLVFFSVSLILLAVLF) threads the bilayer. Over 20 to 493 (HKRKSSLSSR…LLVLATPRQS (474 aa)) the chain is Lumenal. Residue Asn169 is glycosylated (N-linked (GlcNAc...) asparagine). Cys434 provides a ligand contact to heme.

Belongs to the cytochrome P450 family. It depends on heme as a cofactor.

It localises to the membrane. The catalysed reaction is (R)-pulegone + reduced [NADPH--hemoprotein reductase] + O2 = (R)-menthofuran + oxidized [NADPH--hemoprotein reductase] + 2 H2O + H(+). It functions in the pathway secondary metabolite biosynthesis; terpenoid biosynthesis. In terms of biological role, monoterpene synthase that catalyzes the formation of (+)-menthofuran from (+)-pulegone. This is (+)-menthofuran synthase from Mentha piperita (Peppermint).